A 389-amino-acid chain; its full sequence is MSEYLFTSESVSEGHPDKVADQISDAILDAILTQDKHARVAAETLVNTGLVVLAGEITTHANVDYIHVARETIKRIGYNTSDLGFDAKGCAVLVGYDKQSPDIAQGVNEGQGIDLNQGAGDQGLMFGYACDETPTLMPFPIYYAHRLVQRQAELRKDGRLPWLRPDAKSQITCAYDSETGLPKRIDTVVLSTQHSPDISHDMLTEAVIEDIVKPVLPAHMLTAETKFLINPTGRFVIGGPMGDCGLTGRKIIVDTYGGAAPHGGGAFSGKDPSKVDRSAAYAGRYVAKNIVAAGLARQCQIQVSYAIGIAEPTSISVDTFGTNAIPNEKIVELVKRHFDLRPKGIIQMLDLLRPIYTKTAAYGHFGREEPEFTWEATDKAAALRADAGL.

ATP is bound at residue H15. D17 provides a ligand contact to Mg(2+). E43 serves as a coordination point for K(+). Residues E56 and Q99 each coordinate L-methionine. A flexible loop region spans residues 99–109 (QSPDIAQGVNE). Residues 166–168 (DAK), 234–235 (RF), D243, 249–250 (RK), A266, and K270 contribute to the ATP site. D243 is an L-methionine binding site. K274 is a binding site for L-methionine.

It belongs to the AdoMet synthase family. Homotetramer; dimer of dimers. It depends on Mg(2+) as a cofactor. K(+) is required as a cofactor.

The protein resides in the cytoplasm. It catalyses the reaction L-methionine + ATP + H2O = S-adenosyl-L-methionine + phosphate + diphosphate. It participates in amino-acid biosynthesis; S-adenosyl-L-methionine biosynthesis; S-adenosyl-L-methionine from L-methionine: step 1/1. Its function is as follows. Catalyzes the formation of S-adenosylmethionine (AdoMet) from methionine and ATP. The overall synthetic reaction is composed of two sequential steps, AdoMet formation and the subsequent tripolyphosphate hydrolysis which occurs prior to release of AdoMet from the enzyme. This chain is S-adenosylmethionine synthase, found in Laribacter hongkongensis (strain HLHK9).